The chain runs to 281 residues: Nucleotide-binding protein TRQ2_1124 (281 aa).

ATP is bound at residue 9–16 (GLSGAGKT). Residue 58–61 (DVRS) participates in GTP binding.

Belongs to the RapZ-like family.

Its function is as follows. Displays ATPase and GTPase activities. This Thermotoga sp. (strain RQ2) protein is Nucleotide-binding protein TRQ2_1124.